Here is a 157-residue protein sequence, read N- to C-terminus: Putative pre-16S rRNA nuclease (157 aa).

It belongs to the YqgF nuclease family.

Its subcellular location is the cytoplasm. Could be a nuclease involved in processing of the 5'-end of pre-16S rRNA. The chain is Putative pre-16S rRNA nuclease from Ruegeria sp. (strain TM1040) (Silicibacter sp.).